Reading from the N-terminus, the 809-residue chain is MAVSKFTLHNAPTTGGSNEAAVVFPWNTPKKAVNPYLDPAEVAPESALSNLIALYAADNEQEQLRRETLSDEVWERYFFNESRDPVQREIEQDRLISHAKTAREQQRFNPDLVIIADVGAQPAHISKPLLERIKYFHSLGRAKAYSRYLRETIRPCLERLERVRDSQVSASFRFMASHDGLEGLLVLPEMNQDQVKRLSTLVAAHMSMCLDAACGDLFVSDDVKPEEIRQAWERVAAEAMRLEVIPPAFEQLRRKKRRRKPVPYELIPPSLARMLCADWWCRKLWQMRCEWREEQLRAVCLVNKKASPYVSYEAVIHKREQRRKSLEFFRSHELINEDGDTLDMEDVVNASNSNPAHRRNEMMACVKGLELIAEMRGDCAVFYTITCPSRFHATLNNGRPNPKWTSATVRQSSDYLVDTFAAFRKAMHKTGLRWYGVRVAEPHHDGTVHWHLLCFMRKKDRRSITALLRKFAIREDREELGTNTGPRFKSELINPRKGTPTSYIAKYISKNIDGRGLAKEISKETGRPLRDSAEHVSAWASLHRVQQFRFFGIPGRQAYRELRLLAGQAARVQGERKAGAPVLDNPRLDAVLAAADAGCFATYIMKQGGVLVPRKHHLVRTAYELNDEPSAYGDHGIRIYGIWSPIAEGKICTHAMKWKKVRKAVDVQEAAADQGACAPWTRGNNCPLAENLNQQEKDKSADGGTRTDITRMDDKELHDYLYSMSKKDRRELAARLRLVKPKRRKDYKQRITDHQHQQLVYELKSRGFDGSEKEVDLLLRGGSIPSGAGLRIFYRNQRLKEDDKWRNQY.

Residues tyrosine 503 and tyrosine 507 each act as O-(5'-phospho-DNA)-tyrosine intermediate in the active site.

It belongs to the phage GPA family.

Functionally, possible endonuclease which induces a single-strand cut and initiates DNA replication. This chain is Probable replication endonuclease from prophage-like region, found in Salmonella typhimurium (strain LT2 / SGSC1412 / ATCC 700720).